A 188-amino-acid chain; its full sequence is Small ribosomal subunit protein uS12m (188 aa).

The N-terminal 63 residues, 1 to 63 (MSGGRWISNL…AAFRLPQSSG (63 aa)), are a transit peptide targeting the mitochondrion.

This sequence belongs to the universal ribosomal protein uS12 family.

It localises to the mitochondrion. Protein S12 is involved in the translation initiation step. In Oenothera elata subsp. hookeri (Hooker's evening primrose), this protein is Small ribosomal subunit protein uS12m (RPS12).